The following is an 89-amino-acid chain: Small ribosomal subunit protein uS15 (89 aa).

This sequence belongs to the universal ribosomal protein uS15 family. Part of the 30S ribosomal subunit. Forms a bridge to the 50S subunit in the 70S ribosome, contacting the 23S rRNA.

In terms of biological role, one of the primary rRNA binding proteins, it binds directly to 16S rRNA where it helps nucleate assembly of the platform of the 30S subunit by binding and bridging several RNA helices of the 16S rRNA. Functionally, forms an intersubunit bridge (bridge B4) with the 23S rRNA of the 50S subunit in the ribosome. The sequence is that of Small ribosomal subunit protein uS15 from Orientia tsutsugamushi (strain Boryong) (Rickettsia tsutsugamushi).